Reading from the N-terminus, the 53-residue chain is MSPQTETKASVGFKAGVKDYKLTYYTPDYETKDTDILAAFRVTPQPGVPPEEA.

Residues 1 to 2 (MS) constitute a propeptide that is removed on maturation. Position 3 is an N-acetylproline (proline 3). Lysine 14 is modified (N6,N6,N6-trimethyllysine).

The protein belongs to the RuBisCO large chain family. Type I subfamily. Heterohexadecamer of 8 large chains and 8 small chains.

The protein localises to the plastid. Its subcellular location is the chloroplast. It catalyses the reaction 2 (2R)-3-phosphoglycerate + 2 H(+) = D-ribulose 1,5-bisphosphate + CO2 + H2O. The catalysed reaction is D-ribulose 1,5-bisphosphate + O2 = 2-phosphoglycolate + (2R)-3-phosphoglycerate + 2 H(+). Functionally, ruBisCO catalyzes two reactions: the carboxylation of D-ribulose 1,5-bisphosphate, the primary event in carbon dioxide fixation, as well as the oxidative fragmentation of the pentose substrate in the photorespiration process. Both reactions occur simultaneously and in competition at the same active site. The sequence is that of Ribulose bisphosphate carboxylase large chain (rbcL) from Malus domestica (Apple).